Reading from the N-terminus, the 170-residue chain is Acetyl-CoA decarbonylase/synthase complex subunit epsilon 1 (170 aa).

It belongs to the CdhB family. As to quaternary structure, heterotetramer of two alpha and two epsilon subunits. The ACDS complex is made up of alpha, epsilon, beta, gamma and delta subunits with a probable stoichiometry of (alpha(2)epsilon(2))(4)-beta(8)-(gamma(1)delta(1))(8).

It participates in one-carbon metabolism; methanogenesis from acetate. Part of a complex that catalyzes the reversible cleavage of acetyl-CoA, allowing growth on acetate as sole source of carbon and energy. The alpha-epsilon subcomponent functions as a carbon monoxide dehydrogenase. The precise role of the epsilon subunit is unclear; it may have a stabilizing role within the alpha(2)epsilon(2) component and/or be involved in electron transfer to FAD during a potential FAD-mediated CO oxidation. The chain is Acetyl-CoA decarbonylase/synthase complex subunit epsilon 1 (cdhB1) from Methanosarcina acetivorans (strain ATCC 35395 / DSM 2834 / JCM 12185 / C2A).